We begin with the raw amino-acid sequence, 737 residues long: Alpha-adducin (737 aa).

M1 bears the N-acetylmethionine mark. The interval 1–21 (MNGDSRAAVVTSPPPTTAPHK) is disordered. S12 carries the post-translational modification Phosphoserine. S59 bears the Phosphoserine; by PKA mark. S64 is subject to Phosphoserine. At T331 the chain carries Phosphothreonine. 5 positions are modified to phosphoserine: S334, S353, S355, S358, and S366. S408 is modified (phosphoserine; by PKA). Positions 419-430 (YSFTSDGDSGTC) are enriched in polar residues. Disordered regions lie at residues 419 to 490 (YSFT…NLFV) and 576 to 737 (RREV…KSES). S427 bears the Phosphoserine mark. The residue at position 429 (T429) is a Phosphothreonine. At S431 the chain carries Phosphoserine. Phosphoserine; by PKA is present on S436. T445 carries the phosphothreonine; by ROCK2 modification. A phosphoserine mark is found at S464 and S465. The residue at position 480 (T480) is a Phosphothreonine; by ROCK2. S481 is modified (phosphoserine; by PKA). Positions 576 to 601 (RREVERKQKGSEENLDEAREQKEKSP) are enriched in basic and acidic residues. A phosphoserine mark is found at S586, S600, and S613. Pro residues predominate over residues 602-614 (PDQPAVPYPPPST). T614 bears the Phosphothreonine mark. S678, S707, S710, and S714 each carry phosphoserine. Residues 687–714 (PVAEEAAPSAAEEGAAADPGSDGSPGKS) are compositionally biased toward low complexity. A compositionally biased stretch (basic residues) spans 715–737 (PSKKKKKFRTPSFLKKSKKKSES). S716 carries the post-translational modification Phosphoserine; by PKC. Residues 717-734 (KKKKKFRTPSFLKKSKKK) form an interaction with calmodulin region. S726 carries the post-translational modification Phosphoserine; by PKA and PKC.

The protein belongs to the aldolase class II family. Adducin subfamily. As to quaternary structure, heterodimer of an alpha and a beta subunit or an alpha and a gamma subunit.

It is found in the cytoplasm. The protein resides in the cytoskeleton. Its subcellular location is the cell membrane. Functionally, membrane-cytoskeleton-associated protein that promotes the assembly of the spectrin-actin network. Binds to calmodulin. The chain is Alpha-adducin (ADD1) from Pongo abelii (Sumatran orangutan).